The chain runs to 208 residues: Imidazole glycerol phosphate synthase subunit HisH (208 aa).

A Glutamine amidotransferase type-1 domain is found at 1–206 (MIVIVDYDTG…KEMTEDEALS (206 aa)). Cysteine 79 functions as the Nucleophile in the catalytic mechanism. Residues histidine 181 and glutamate 183 contribute to the active site.

In terms of assembly, heterodimer of HisH and HisF.

It is found in the cytoplasm. It catalyses the reaction 5-[(5-phospho-1-deoxy-D-ribulos-1-ylimino)methylamino]-1-(5-phospho-beta-D-ribosyl)imidazole-4-carboxamide + L-glutamine = D-erythro-1-(imidazol-4-yl)glycerol 3-phosphate + 5-amino-1-(5-phospho-beta-D-ribosyl)imidazole-4-carboxamide + L-glutamate + H(+). It carries out the reaction L-glutamine + H2O = L-glutamate + NH4(+). The protein operates within amino-acid biosynthesis; L-histidine biosynthesis; L-histidine from 5-phospho-alpha-D-ribose 1-diphosphate: step 5/9. Its function is as follows. IGPS catalyzes the conversion of PRFAR and glutamine to IGP, AICAR and glutamate. The HisH subunit catalyzes the hydrolysis of glutamine to glutamate and ammonia as part of the synthesis of IGP and AICAR. The resulting ammonia molecule is channeled to the active site of HisF. This Lacticaseibacillus casei (strain BL23) (Lactobacillus casei) protein is Imidazole glycerol phosphate synthase subunit HisH.